A 350-amino-acid chain; its full sequence is Phosphoribosylformylglycinamidine cyclo-ligase (350 aa).

Belongs to the AIR synthase family.

It localises to the cytoplasm. The enzyme catalyses 2-formamido-N(1)-(5-O-phospho-beta-D-ribosyl)acetamidine + ATP = 5-amino-1-(5-phospho-beta-D-ribosyl)imidazole + ADP + phosphate + H(+). It functions in the pathway purine metabolism; IMP biosynthesis via de novo pathway; 5-amino-1-(5-phospho-D-ribosyl)imidazole from N(2)-formyl-N(1)-(5-phospho-D-ribosyl)glycinamide: step 2/2. The sequence is that of Phosphoribosylformylglycinamidine cyclo-ligase from Pseudoalteromonas translucida (strain TAC 125).